Reading from the N-terminus, the 238-residue chain is Probable transcriptional regulatory protein VPA0011 (238 aa).

This sequence belongs to the TACO1 family.

The protein resides in the cytoplasm. The sequence is that of Probable transcriptional regulatory protein VPA0011 from Vibrio parahaemolyticus serotype O3:K6 (strain RIMD 2210633).